The following is a 103-amino-acid chain: Cell division protein CrgA (103 aa).

2 consecutive transmembrane segments (helical) span residues 49–69 (FVPLFCALMIIGLIWCVVYYL) and 80–100 (IGAWNLGIGFALIMIGFLMTM).

It belongs to the CrgA family.

It is found in the cell membrane. Functionally, involved in cell division. The chain is Cell division protein CrgA from Bifidobacterium longum (strain NCC 2705).